The following is an 88-amino-acid chain: Small ribosomal subunit protein bS20 (88 aa).

The protein belongs to the bacterial ribosomal protein bS20 family.

Functionally, binds directly to 16S ribosomal RNA. In Clostridium kluyveri (strain NBRC 12016), this protein is Small ribosomal subunit protein bS20.